The chain runs to 389 residues: Flap endonuclease 1 (389 aa).

The tract at residues 1 to 105 is N-domain; that stretch reads MGIKGLTALL…GELAKRKDKR (105 aa). D34 lines the Mg(2+) pocket. Position 71 (R71) interacts with DNA. Positions 87, 159, 161, 180, and 182 each coordinate Mg(2+). The I-domain stretch occupies residues 123 to 254; sequence EVEKLSKRTV…KTALKLIKEH (132 aa). E159 serves as a coordination point for DNA. DNA contacts are provided by G232 and D234. Residue D234 participates in Mg(2+) binding. The segment at 338 to 346 is interaction with PCNA; it reads SQNRLESFF. Residues 356–389 form a disordered region; sequence IGKRKVEETKSGKGSKAGLNKKSKGVSGYKSKKT. Residues 374 to 389 show a composition bias toward basic residues; it reads LNKKSKGVSGYKSKKT.

This sequence belongs to the XPG/RAD2 endonuclease family. FEN1 subfamily. As to quaternary structure, interacts with PCNA. Three molecules of FEN1 bind to one PCNA trimer with each molecule binding to one PCNA monomer. PCNA stimulates the nuclease activity without altering cleavage specificity. Mg(2+) is required as a cofactor. In terms of processing, phosphorylated. Phosphorylation upon DNA damage induces relocalization to the nuclear plasma.

The protein resides in the nucleus. The protein localises to the nucleolus. Its subcellular location is the nucleoplasm. It is found in the mitochondrion. Functionally, structure-specific nuclease with 5'-flap endonuclease and 5'-3' exonuclease activities involved in DNA replication and repair. During DNA replication, cleaves the 5'-overhanging flap structure that is generated by displacement synthesis when DNA polymerase encounters the 5'-end of a downstream Okazaki fragment. It enters the flap from the 5'-end and then tracks to cleave the flap base, leaving a nick for ligation. Also involved in the long patch base excision repair (LP-BER) pathway, by cleaving within the apurinic/apyrimidinic (AP) site-terminated flap. Acts as a genome stabilization factor that prevents flaps from equilibrating into structures that lead to duplications and deletions. Also possesses 5'-3' exonuclease activity on nicked or gapped double-stranded DNA, and exhibits RNase H activity. Also involved in replication and repair of rDNA and in repairing mitochondrial DNA. The chain is Flap endonuclease 1 from Ostreococcus tauri.